The sequence spans 547 residues: Protein RBL (547 aa).

5 WD repeats span residues 21-60 (LEHGVIKCVAFNHRGSLLAAGCADGGCVIWDFETRGIAKE), 65-104 (DCSAAITSVSWSKYGHRLLVSAADKSLTLWDVSTGEKIAR), 214-253 (SGAAPVKNIVFSRNGQYLLTNSHDRTIRIYENLLPAKNVL), 285-332 (EFQD…VKIL), and 334-373 (GPKEALIDLAWHPVHPIIVSVSLAGLVYIWAKDYTENWSA). The disordered stretch occupies residues 466–547 (SPASEEAGQN…GGDDDDDAYY (82 aa)). Positions 499–511 (SEKAMELQAEKAK) are enriched in basic and acidic residues. Acidic residues predominate over residues 530–547 (QETDDSINGGDDDDDAYY).

Part of a complex composed of TRO, RBL and WDR5A. Interacts with TRO and WDR5A, but not with WDR5B. This complex is formed during both vegetative and reproductive development. As to expression, strongly expressed in root tips, shoot apices, vascular tissues, developing embryos and endosperms.

The protein localises to the nucleus. In terms of biological role, promotes the expression of FLC and FLC homologs to repress the floral transition. Promotes WRKY70 and LTP7 genes epigenetic methylation (e.g. H3K4me3) and subsequent expression. The protein is Protein RBL of Arabidopsis thaliana (Mouse-ear cress).